Here is a 208-residue protein sequence, read N- to C-terminus: MARYTGPVEKIERRLGVSLELKGERRLAGKSALDKRPYAPGQHGQRRTKISEYGLQLREKQKIKFYYGVLEKQFRKFFREANRQEGNTGENLIKLLERRLDNVVYRMGFASTRRFARQLVTHGHILVNGKKVNIPSYLVKEGDRIEIREKSKNNVQIQRALELSQQTGIAPWVDVDKEKLVGVFQRVPEREEVNIPVEERLVVELYSK.

One can recognise an S4 RNA-binding domain in the interval 98–160 (RRLDNVVYRM…SKNNVQIQRA (63 aa)).

Belongs to the universal ribosomal protein uS4 family. As to quaternary structure, part of the 30S ribosomal subunit. Contacts protein S5. The interaction surface between S4 and S5 is involved in control of translational fidelity.

Its function is as follows. One of the primary rRNA binding proteins, it binds directly to 16S rRNA where it nucleates assembly of the body of the 30S subunit. With S5 and S12 plays an important role in translational accuracy. The chain is Small ribosomal subunit protein uS4 from Nautilia profundicola (strain ATCC BAA-1463 / DSM 18972 / AmH).